A 504-amino-acid chain; its full sequence is Pentatricopeptide repeat-containing protein At5g16640, mitochondrial (504 aa).

The transit peptide at 1–43 (MRRSISSKAKSFLHRNLLYSGNSGTSPSSSFSICGFCFSRRAY) directs the protein to the mitochondrion. PPR repeat units lie at residues 45-79 (NGSDYREMLRNGIRFMKLDDSLDLFFHMVQCRPLP), 80-114 (SIADFSRLLSAISKMKKYDVVIYLWEQMQMLGIPH), 115-149 (NLCTCNILLNCFCRCSQLSLALSFLGKMIKLGHEP), 150-184 (SIVTFGSLLNGFCRGDRVYDALYMFDQMVGMGYKP), 185-219 (NVVIYNTIIDGLCKSKQVDNALDLLNRMEKDGIGP), 220-254 (DVVTYNSLISGLCSSGRWSDATRMVSCMTKREIYP), 255-289 (DVFTFNALIDACVKEGRVSEAEEFYEEMIRRSLDP), 290-324 (DIVTYSLLIYGLCMYSRLDEAEEMFGFMVSKGCFP), 325-359 (DVVTYSILINGYCKSKKVEHGMKLFCEMSQRGVVR), 360-394 (NTVTYTILIQGYCRAGKLNVAEEIFRRMVFCGVHP), 395-429 (NIITYNVLLHGLCDNGKIEKALVILADMQKNGMDA), 430-464 (DIVTYNIIIRGMCKAGEVADAWDIYCSLNCQGLMP), and 465-499 (DIWTYTTMMLGLYKKGLRREADALFRKMKEDGILP).

Belongs to the PPR family. P subfamily.

It is found in the mitochondrion. This Arabidopsis thaliana (Mouse-ear cress) protein is Pentatricopeptide repeat-containing protein At5g16640, mitochondrial.